A 239-amino-acid chain; its full sequence is EF-hand domain-containing protein D2 (239 aa).

The segment at 1-51 is disordered; that stretch reads MATDELASKLSRRLQMEDEGGEATEQPGLNGAAAAAAEAPDETAQALGSAD. Residue Ala2 is modified to N-acetylalanine. Ser11 carries the phosphoserine modification. Low complexity predominate over residues 32-46; that stretch reads AAAAAAEAPDETAQA. Phosphoserine is present on residues Ser73 and Ser75. Tyr82 bears the Phosphotyrosine mark. 2 EF-hand domains span residues 91–126 and 127–162; these read KQIK…LGAP and QTHL…AAAG. 8 residues coordinate Ca(2+): Asp104, Asp108, Glu115, Asp140, Asp142, Asp144, Lys146, and Glu151. At Lys232 the chain carries N6-acetyllysine.

In terms of assembly, interacts with CASP9; with inactive form.

Its subcellular location is the membrane raft. May regulate B-cell receptor (BCR)-induced immature and primary B-cell apoptosis. Plays a role as negative regulator of the canonical NF-kappa-B-activating branch. Controls spontaneous apoptosis through the regulation of BCL2L1 abundance. This Rattus norvegicus (Rat) protein is EF-hand domain-containing protein D2 (Efhd2).